The primary structure comprises 453 residues: Bifunctional protein GlmU (453 aa).

A pyrophosphorylase region spans residues 1–225 (MNIVILAAGT…EWETLGVNSK (225 aa)). Residues 6-9 (LAAG), lysine 20, glutamine 71, 76-77 (GT), 98-100 (YGD), glycine 135, glutamate 150, asparagine 165, and asparagine 223 each bind UDP-N-acetyl-alpha-D-glucosamine. Aspartate 100 contacts Mg(2+). Asparagine 223 serves as a coordination point for Mg(2+). A linker region spans residues 226-246 (AQLAELERIHQRNVADALLAD). Residues 247–453 (GVTLADPARI…GYVRPVKKKS (207 aa)) form an N-acetyltransferase region. Residues arginine 329 and lysine 347 each coordinate UDP-N-acetyl-alpha-D-glucosamine. Catalysis depends on histidine 359, which acts as the Proton acceptor. Tyrosine 362 and asparagine 373 together coordinate UDP-N-acetyl-alpha-D-glucosamine. Acetyl-CoA contacts are provided by residues alanine 376, 382-383 (NY), serine 401, and alanine 419.

The protein in the N-terminal section; belongs to the N-acetylglucosamine-1-phosphate uridyltransferase family. This sequence in the C-terminal section; belongs to the transferase hexapeptide repeat family. As to quaternary structure, homotrimer. Requires Mg(2+) as cofactor.

It is found in the cytoplasm. The catalysed reaction is alpha-D-glucosamine 1-phosphate + acetyl-CoA = N-acetyl-alpha-D-glucosamine 1-phosphate + CoA + H(+). The enzyme catalyses N-acetyl-alpha-D-glucosamine 1-phosphate + UTP + H(+) = UDP-N-acetyl-alpha-D-glucosamine + diphosphate. It participates in nucleotide-sugar biosynthesis; UDP-N-acetyl-alpha-D-glucosamine biosynthesis; N-acetyl-alpha-D-glucosamine 1-phosphate from alpha-D-glucosamine 6-phosphate (route II): step 2/2. It functions in the pathway nucleotide-sugar biosynthesis; UDP-N-acetyl-alpha-D-glucosamine biosynthesis; UDP-N-acetyl-alpha-D-glucosamine from N-acetyl-alpha-D-glucosamine 1-phosphate: step 1/1. Its pathway is bacterial outer membrane biogenesis; LPS lipid A biosynthesis. Its function is as follows. Catalyzes the last two sequential reactions in the de novo biosynthetic pathway for UDP-N-acetylglucosamine (UDP-GlcNAc). The C-terminal domain catalyzes the transfer of acetyl group from acetyl coenzyme A to glucosamine-1-phosphate (GlcN-1-P) to produce N-acetylglucosamine-1-phosphate (GlcNAc-1-P), which is converted into UDP-GlcNAc by the transfer of uridine 5-monophosphate (from uridine 5-triphosphate), a reaction catalyzed by the N-terminal domain. In Burkholderia multivorans (strain ATCC 17616 / 249), this protein is Bifunctional protein GlmU.